A 93-amino-acid polypeptide reads, in one-letter code: Acylphosphatase (93 aa).

Residues cysteine 5 and cysteine 49 are joined by a disulfide bond. The 89-residue stretch at 5–93 (CIIAWVYGRV…ETLTGFSIRY (89 aa)) folds into the Acylphosphatase-like domain. Asparagine 38 is an active-site residue.

Belongs to the acylphosphatase family.

The enzyme catalyses an acyl phosphate + H2O = a carboxylate + phosphate + H(+). The protein is Acylphosphatase of Salmonella paratyphi A (strain ATCC 9150 / SARB42).